Consider the following 154-residue polypeptide: MAKEEKRVVAQNRKARHDYFIEQTIEAGIVLSGTEVKSIRAGKVSLKDSYANVKNGEVFIYGMHISPYEQGNIFNKDPLRDRKLLLHRAEINKLIGYIQQKGMTLVPLEVYFKNGKVKIELGIAKGKKLYDKREDIAKRDALREIDRRLKENFR.

The protein belongs to the SmpB family.

The protein localises to the cytoplasm. Its function is as follows. Required for rescue of stalled ribosomes mediated by trans-translation. Binds to transfer-messenger RNA (tmRNA), required for stable association of tmRNA with ribosomes. tmRNA and SmpB together mimic tRNA shape, replacing the anticodon stem-loop with SmpB. tmRNA is encoded by the ssrA gene; the 2 termini fold to resemble tRNA(Ala) and it encodes a 'tag peptide', a short internal open reading frame. During trans-translation Ala-aminoacylated tmRNA acts like a tRNA, entering the A-site of stalled ribosomes, displacing the stalled mRNA. The ribosome then switches to translate the ORF on the tmRNA; the nascent peptide is terminated with the 'tag peptide' encoded by the tmRNA and targeted for degradation. The ribosome is freed to recommence translation, which seems to be the essential function of trans-translation. This chain is SsrA-binding protein, found in Acetivibrio thermocellus (strain ATCC 27405 / DSM 1237 / JCM 9322 / NBRC 103400 / NCIMB 10682 / NRRL B-4536 / VPI 7372) (Clostridium thermocellum).